Consider the following 424-residue polypeptide: 3-ketoacyl-CoA thiolase B, peroxisomal (424 aa).

The transit peptide at 1–26 (MHRLQVVLGHLAGRPESSSALQAAPC) directs the protein to the peroxisome. The segment at 1-26 (MHRLQVVLGHLAGRPESSSALQAAPC) is PTS2-type peroxisomal targeting signal. Cys-123 serves as the catalytic Acyl-thioester intermediate. 2 positions are modified to N6-acetyllysine: Lys-173 and Lys-234. Arg-249, Thr-252, and Ser-276 together coordinate CoA. Cys-408 functions as the Proton donor/acceptor in the catalytic mechanism.

Belongs to the thiolase-like superfamily. Thiolase family. In terms of assembly, homodimer. Interacts (via PTS2-type peroxisomal targeting signal region) with PEX7; leading to its translocation into peroxisomes. In terms of tissue distribution, mainly expressed in liver; weaker levels in kidney, intestine and white adipose tissue.

Its subcellular location is the peroxisome. It catalyses the reaction an acyl-CoA + acetyl-CoA = a 3-oxoacyl-CoA + CoA. The catalysed reaction is 2 acetyl-CoA = acetoacetyl-CoA + CoA. It carries out the reaction hexanoyl-CoA + acetyl-CoA = 3-oxooctanoyl-CoA + CoA. The enzyme catalyses tetradecanoyl-CoA + acetyl-CoA = 3-oxohexadecanoyl-CoA + CoA. It catalyses the reaction 3-oxohexadecanedioyl-CoA + CoA = tetradecanedioyl-CoA + acetyl-CoA. The catalysed reaction is 3-oxo-(6Z,9Z,12Z,15Z,18Z,21Z)-tetracosahexaenoyl-CoA + CoA = (4Z,7Z,10Z,13Z,16Z,19Z)-docosahexaenoyl-CoA + acetyl-CoA. The protein operates within lipid metabolism; peroxisomal fatty acid beta-oxidation. Functionally, responsible for the thiolytic cleavage of straight chain 3-keto fatty acyl-CoAs (3-oxoacyl-CoAs). Plays an important role in fatty acid peroxisomal beta-oxidation. Catalyzes the cleavage of short, medium, long, and very long straight chain 3-oxoacyl-CoAs. The sequence is that of 3-ketoacyl-CoA thiolase B, peroxisomal from Mus musculus (Mouse).